The primary structure comprises 259 residues: Cell division protein FtsQ (259 aa).

Residues 1–15 (MTRDQTATFGRHALR) lie on the Cytoplasmic side of the membrane. A helical transmembrane segment spans residues 16–36 (VAGSGLLVAGVVALGLLGWQW). Topologically, residues 37–259 (RANVTVDRVA…VVTRTRPLDG (223 aa)) are periplasmic. In terms of domain architecture, POTRA spans 40-109 (VTVDRVAVTG…GALTISVTER (70 aa)).

This sequence belongs to the FtsQ/DivIB family. FtsQ subfamily.

The protein resides in the cell inner membrane. Its function is as follows. Essential cell division protein. The chain is Cell division protein FtsQ from Salinibacter ruber (strain DSM 13855 / M31).